Reading from the N-terminus, the 443-residue chain is Phosphoglucosamine mutase (443 aa).

Ser-101 acts as the Phosphoserine intermediate in catalysis. Positions 101, 240, 242, and 244 each coordinate Mg(2+). Ser-101 is subject to Phosphoserine.

The protein belongs to the phosphohexose mutase family. Mg(2+) is required as a cofactor. Post-translationally, activated by phosphorylation.

The catalysed reaction is alpha-D-glucosamine 1-phosphate = D-glucosamine 6-phosphate. In terms of biological role, catalyzes the conversion of glucosamine-6-phosphate to glucosamine-1-phosphate. This chain is Phosphoglucosamine mutase, found in Psychromonas ingrahamii (strain DSM 17664 / CCUG 51855 / 37).